The chain runs to 1347 residues: Serine-aspartate repeat-containing protein D (1347 aa).

The signal sequence occupies residues 1 to 35 (MLNRENKTAITRKGMVSNRLNKFSIRKYTVGTASI). The short motif at 23-34 (FSIRKYTVGTAS) is the YSIRK-G/S signaling motif element. The tract at residues 36–568 (LVGTTLIFGL…NNQSGGAGQE (533 aa)) is ligand binding A region. The interval 55 to 185 (STNKELNEAT…NKKVDAKTES (131 aa)) is disordered. Composition is skewed to polar residues over residues 62 to 71 (EATTSASDNQ) and 94 to 109 (EMVSSQGNETTSNGNK). Residues 130–145 (KSDEQASPKSTNEDLN) show a composition bias toward basic and acidic residues. Polar residues-rich tracts occupy residues 146 to 155 (TKQTISNQEA) and 163 to 173 (NKSVVNAQPTN). Positions 174–183 (EENKKVDAKT) are enriched in basic and acidic residues. 5 consecutive CNA-B domains span residues 569 to 680 (VYKI…IYKP), 681 to 791 (KYNL…YKTP), 792 to 901 (KYNL…FYKP), 902 to 1012 (TYNL…YKTS), and 1013 to 1123 (KYSL…EEDT). Disordered stretches follow at residues 857–883 (ETPSGYTPTQVGSGTDEGIDSNGTSTT), 972–992 (YTPTSVTSGNDTEKDSNGLTT), and 1078–1323 (EKPA…SNNA). Polar residues-rich tracts occupy residues 860-869 (SGYTPTQVGS) and 972-981 (YTPTSVTSGN). 2 stretches are compositionally biased toward acidic residues: residues 1091 to 1101 (TEDDKDADGGE) and 1118 to 1286 (YFEE…DSDS). The short motif at 1310–1314 (LPETG) is the LPXTG sorting signal element. Pentaglycyl murein peptidoglycan amidated threonine is present on Thr-1313. A propeptide spans 1314 to 1347 (GNENSGSNNATLFGGLFAALGSLLLFGRRKKQNK) (removed by sortase).

The protein belongs to the serine-aspartate repeat-containing protein (SDr) family. As to quaternary structure, interacts with host DSG1; this interaction increases S.aureus adherence to keratinocytes.

It localises to the secreted. It is found in the cell wall. Cell surface-associated calcium-binding protein which plays an important role in adhesion and pathogenesis. Mediates interactions with components of the extracellular matrix such as host DSG1 to promote bacterial adhesion to host cells. Contributes to the resistance to killing by innate immune components such as neutrophils present in blood and thus attenuates bacterial clearance. In Staphylococcus aureus (strain MW2), this protein is Serine-aspartate repeat-containing protein D (sdrD).